Reading from the N-terminus, the 231-residue chain is Secreted LysM effector LysM13 (231 aa).

An N-terminal signal peptide occupies residues 1-19; that stretch reads MVFLSLKYALSGLAATAAA. Asn-30, Asn-34, Asn-77, Asn-100, Asn-130, Asn-201, and Asn-226 each carry an N-linked (GlcNAc...) asparagine glycan. The region spanning 38–82 is the LysM domain; sequence TTYTTTSEDTIFTVARKFDRGPCDIARYNRMIDAEHIFANFTLRI.

Belongs to the secreted LysM effector family.

The protein resides in the secreted. In terms of biological role, secreted LysM effector that might have a role in sequestration of chitin oligosaccharides (breakdown products of fungal cell walls that are released during invasion and act as triggers of host immunity) to dampen host defense. This chain is Secreted LysM effector LysM13, found in Penicillium expansum (Blue mold rot fungus).